A 205-amino-acid polypeptide reads, in one-letter code: Potassium-transporting ATPase KdpC subunit (205 aa).

A helical transmembrane segment spans residues valine 9–isoleucine 29.

Belongs to the KdpC family. As to quaternary structure, the system is composed of three essential subunits: KdpA, KdpB and KdpC.

It is found in the cell membrane. Functionally, part of the high-affinity ATP-driven potassium transport (or Kdp) system, which catalyzes the hydrolysis of ATP coupled with the electrogenic transport of potassium into the cytoplasm. This subunit acts as a catalytic chaperone that increases the ATP-binding affinity of the ATP-hydrolyzing subunit KdpB by the formation of a transient KdpB/KdpC/ATP ternary complex. This chain is Potassium-transporting ATPase KdpC subunit, found in Thermoplasma acidophilum (strain ATCC 25905 / DSM 1728 / JCM 9062 / NBRC 15155 / AMRC-C165).